Here is a 439-residue protein sequence, read N- to C-terminus: Enolase (439 aa).

Position 163 (glutamine 163) interacts with (2R)-2-phosphoglycerate. The active-site Proton donor is the glutamate 205. Positions 242, 287, and 314 each coordinate Mg(2+). Residues lysine 339, arginine 368, serine 369, and lysine 390 each coordinate (2R)-2-phosphoglycerate. Lysine 339 (proton acceptor) is an active-site residue.

Belongs to the enolase family. Mg(2+) is required as a cofactor.

It is found in the cytoplasm. The protein resides in the secreted. The protein localises to the cell surface. It carries out the reaction (2R)-2-phosphoglycerate = phosphoenolpyruvate + H2O. The protein operates within carbohydrate degradation; glycolysis; pyruvate from D-glyceraldehyde 3-phosphate: step 4/5. In terms of biological role, catalyzes the reversible conversion of 2-phosphoglycerate (2-PG) into phosphoenolpyruvate (PEP). It is essential for the degradation of carbohydrates via glycolysis. The protein is Enolase of Levilactobacillus brevis (strain ATCC 367 / BCRC 12310 / CIP 105137 / JCM 1170 / LMG 11437 / NCIMB 947 / NCTC 947) (Lactobacillus brevis).